Consider the following 325-residue polypeptide: Beta-ketoacyl-[acyl-carrier-protein] synthase III (325 aa).

Catalysis depends on residues Cys-119 and His-252. The segment at 253-257 is ACP-binding; sequence QANIR. Asn-282 is a catalytic residue.

Belongs to the thiolase-like superfamily. FabH family. In terms of assembly, homodimer.

Its subcellular location is the cytoplasm. The catalysed reaction is malonyl-[ACP] + acetyl-CoA + H(+) = 3-oxobutanoyl-[ACP] + CO2 + CoA. It participates in lipid metabolism; fatty acid biosynthesis. In terms of biological role, catalyzes the condensation reaction of fatty acid synthesis by the addition to an acyl acceptor of two carbons from malonyl-ACP. Catalyzes the first condensation reaction which initiates fatty acid synthesis and may therefore play a role in governing the total rate of fatty acid production. Possesses both acetoacetyl-ACP synthase and acetyl transacylase activities. Its substrate specificity determines the biosynthesis of branched-chain and/or straight-chain of fatty acids. This Delftia acidovorans (strain DSM 14801 / SPH-1) protein is Beta-ketoacyl-[acyl-carrier-protein] synthase III.